The chain runs to 399 residues: Elongation factor Tu (399 aa).

Positions 10-209 constitute a tr-type G domain; sequence KPHVNIGTIG…EVDRYIPTPE (200 aa). Residues 19-26 are G1; that stretch reads GHVDHGKT. 19–26 contributes to the GTP binding site; that stretch reads GHVDHGKT. A Mg(2+)-binding site is contributed by T26. Positions 60–64 are G2; the sequence is GITIA. The segment at 81-84 is G3; the sequence is DCPG. Residues 81 to 85 and 136 to 139 each bind GTP; these read DCPGH and NKED. The tract at residues 136-139 is G4; it reads NKED. The tract at residues 174–176 is G5; the sequence is SAL.

The protein belongs to the TRAFAC class translation factor GTPase superfamily. Classic translation factor GTPase family. EF-Tu/EF-1A subfamily. Monomer.

It is found in the cytoplasm. It catalyses the reaction GTP + H2O = GDP + phosphate + H(+). Its function is as follows. GTP hydrolase that promotes the GTP-dependent binding of aminoacyl-tRNA to the A-site of ribosomes during protein biosynthesis. This chain is Elongation factor Tu, found in Wolinella succinogenes (strain ATCC 29543 / DSM 1740 / CCUG 13145 / JCM 31913 / LMG 7466 / NCTC 11488 / FDC 602W) (Vibrio succinogenes).